The chain runs to 405 residues: Tryptophan synthase beta chain (405 aa).

Lysine 95 is subject to N6-(pyridoxal phosphate)lysine.

The protein belongs to the TrpB family. Tetramer of two alpha and two beta chains. Requires pyridoxal 5'-phosphate as cofactor.

The enzyme catalyses (1S,2R)-1-C-(indol-3-yl)glycerol 3-phosphate + L-serine = D-glyceraldehyde 3-phosphate + L-tryptophan + H2O. It participates in amino-acid biosynthesis; L-tryptophan biosynthesis; L-tryptophan from chorismate: step 5/5. In terms of biological role, the beta subunit is responsible for the synthesis of L-tryptophan from indole and L-serine. The polypeptide is Tryptophan synthase beta chain (Pseudomonas putida (strain ATCC 47054 / DSM 6125 / CFBP 8728 / NCIMB 11950 / KT2440)).